A 122-amino-acid polypeptide reads, in one-letter code: Basic phospholipase A2 homolog (122 aa).

7 disulfide bridges follow: C26–C116, C28–C44, C43–C96, C49–C122, C50–C89, C57–C82, and C75–C87. Positions 106–117 are important for membrane-damaging activities in eukaryotes and bacteria; heparin-binding; it reads KKHRVTVKFLCK.

Belongs to the phospholipase A2 family. Group II subfamily. K49 sub-subfamily. Homodimer; non-covalently linked. In terms of tissue distribution, expressed by the venom gland.

It is found in the secreted. In terms of biological role, snake venom phospholipase A2 (PLA2) that has almost no phospholipase A2 activity. Is myotoxic. Displays edema-inducing activities. A model of myotoxic mechanism has been proposed: an apo Lys49-PLA2 is activated by the entrance of a hydrophobic molecule (e.g. fatty acid) at the hydrophobic channel of the protein leading to a reorientation of a monomer. This reorientation causes a transition between 'inactive' to 'active' states, causing alignment of C-terminal and membrane-docking sites (MDoS) side-by-side and putting the membrane-disruption sites (MDiS) in the same plane, exposed to solvent and in a symmetric position for both monomers. The MDoS region stabilizes the toxin on membrane by the interaction of charged residues with phospholipid head groups. Subsequently, the MDiS region destabilizes the membrane with penetration of hydrophobic residues. This insertion causes a disorganization of the membrane, allowing an uncontrolled influx of ions (i.e. calcium and sodium), and eventually triggering irreversible intracellular alterations and cell death. The protein is Basic phospholipase A2 homolog of Protobothrops mucrosquamatus (Taiwan habu).